A 310-amino-acid polypeptide reads, in one-letter code: Protoheme IX farnesyltransferase 2 (310 aa).

9 helical membrane passes run 21–41 (IWYL…GIYG), 46–66 (IATW…ANVL), 99–119 (FGLF…LTTT), 125–145 (WAAA…SYML), 153–173 (IVLG…AVTT), 180–200 (GLVM…ALTL), 226–246 (VIAV…LITL), 256–276 (VYLA…AWVV), and 284–304 (AWVL…ALMV).

It belongs to the UbiA prenyltransferase family. Protoheme IX farnesyltransferase subfamily.

It localises to the cell membrane. It carries out the reaction heme b + (2E,6E)-farnesyl diphosphate + H2O = Fe(II)-heme o + diphosphate. It functions in the pathway porphyrin-containing compound metabolism; heme O biosynthesis; heme O from protoheme: step 1/1. In terms of biological role, converts heme B (protoheme IX) to heme O by substitution of the vinyl group on carbon 2 of heme B porphyrin ring with a hydroxyethyl farnesyl side group. The protein is Protoheme IX farnesyltransferase 2 of Cenarchaeum symbiosum (strain A).